The primary structure comprises 701 residues: Polyribonucleotide nucleotidyltransferase (701 aa).

The Mg(2+) site is built by D487 and D493. The region spanning 554–613 is the KH domain; that stretch reads PTMIAMKIDTDKIRDVIGKGGATIRAICEETKASIDIEDDGSIKIFGETKEAAEAARQRV. The 69-residue stretch at 623-691 folds into the S1 motif domain; that stretch reads GKIYVGKVER…NRGRIKLSIK (69 aa).

This sequence belongs to the polyribonucleotide nucleotidyltransferase family. In terms of assembly, component of the RNA degradosome, which is a multiprotein complex involved in RNA processing and mRNA degradation. Mg(2+) serves as cofactor.

Its subcellular location is the cytoplasm. It catalyses the reaction RNA(n+1) + phosphate = RNA(n) + a ribonucleoside 5'-diphosphate. Its function is as follows. Involved in mRNA degradation. Catalyzes the phosphorolysis of single-stranded polyribonucleotides processively in the 3'- to 5'-direction. The polypeptide is Polyribonucleotide nucleotidyltransferase (Pseudomonas putida (strain W619)).